A 481-amino-acid polypeptide reads, in one-letter code: Phenylalanine--tRNA ligase alpha subunit (481 aa).

Residues T322, 361–363 (QLE), and Y401 each bind L-phenylalanine. E403 is a Mg(2+) binding site. Position 426 (F426) interacts with L-phenylalanine.

The protein belongs to the class-II aminoacyl-tRNA synthetase family. Phe-tRNA synthetase alpha subunit type 2 subfamily. In terms of assembly, tetramer of two alpha and two beta subunits. Requires Mg(2+) as cofactor.

It localises to the cytoplasm. It carries out the reaction tRNA(Phe) + L-phenylalanine + ATP = L-phenylalanyl-tRNA(Phe) + AMP + diphosphate + H(+). The polypeptide is Phenylalanine--tRNA ligase alpha subunit (Methanoculleus marisnigri (strain ATCC 35101 / DSM 1498 / JR1)).